The following is a 295-amino-acid chain: Shikimate dehydrogenase (NADP(+)) (295 aa).

Shikimate-binding positions include 20–22 (SWS) and threonine 68. The Proton acceptor role is filled by lysine 72. Residues asparagine 93 and aspartate 108 each coordinate shikimate. NADP(+) is bound by residues 132–136 (GNGGA) and methionine 234. Tyrosine 236 contributes to the shikimate binding site. Residue glycine 257 participates in NADP(+) binding.

The protein belongs to the shikimate dehydrogenase family. As to quaternary structure, homodimer.

It catalyses the reaction shikimate + NADP(+) = 3-dehydroshikimate + NADPH + H(+). It participates in metabolic intermediate biosynthesis; chorismate biosynthesis; chorismate from D-erythrose 4-phosphate and phosphoenolpyruvate: step 4/7. Functionally, involved in the biosynthesis of the chorismate, which leads to the biosynthesis of aromatic amino acids. Catalyzes the reversible NADPH linked reduction of 3-dehydroshikimate (DHSA) to yield shikimate (SA). This is Shikimate dehydrogenase (NADP(+)) from Chlorobaculum tepidum (strain ATCC 49652 / DSM 12025 / NBRC 103806 / TLS) (Chlorobium tepidum).